A 687-amino-acid chain; its full sequence is Guanine-nucleotide exchange factor YEL1 (687 aa).

The region spanning 57 to 264 (ILQNKEAAND…SEYYKTLNET (208 aa)) is the SEC7 domain. Residues 63 to 97 (AANDEKPVIPTTDTATAGTGTEDISSTQSEETDQN) are disordered. A compositionally biased stretch (low complexity) spans 73–83 (TTDTATAGTGT). Thr290 is modified (phosphothreonine). A phosphoserine mark is found at Ser293 and Ser299. Residues 412–551 (TSRRTSLSYL…DCINFWAGRI (140 aa)) enclose the PH domain.

This sequence belongs to the YEL1 family.

The protein resides in the cytoplasm. It is found in the cell membrane. Its subcellular location is the bud neck. It localises to the bud tip. Guanine nucleotide exchange factor for ARF3 required for localization of ARF3 to the bud neck and tip and involved in actin patch polarization. The sequence is that of Guanine-nucleotide exchange factor YEL1 (YEL1) from Saccharomyces cerevisiae (strain JAY291) (Baker's yeast).